The sequence spans 185 residues: Ribosome-recycling factor (185 aa).

This sequence belongs to the RRF family.

The protein resides in the cytoplasm. Functionally, responsible for the release of ribosomes from messenger RNA at the termination of protein biosynthesis. May increase the efficiency of translation by recycling ribosomes from one round of translation to another. The protein is Ribosome-recycling factor of Corynebacterium efficiens (strain DSM 44549 / YS-314 / AJ 12310 / JCM 11189 / NBRC 100395).